The sequence spans 128 residues: Small ribosomal subunit protein uS8c (128 aa).

Belongs to the universal ribosomal protein uS8 family. Part of the 30S ribosomal subunit.

It is found in the plastid. Its subcellular location is the chloroplast. One of the primary rRNA binding proteins, it binds directly to 16S rRNA central domain where it helps coordinate assembly of the platform of the 30S subunit. The sequence is that of Small ribosomal subunit protein uS8c (rps8) from Gnetum parvifolium (Small-leaved jointfir).